A 96-amino-acid polypeptide reads, in one-letter code: Co-chaperonin GroES (96 aa).

It belongs to the GroES chaperonin family. As to quaternary structure, heptamer of 7 subunits arranged in a ring. Interacts with the chaperonin GroEL.

It localises to the cytoplasm. In terms of biological role, together with the chaperonin GroEL, plays an essential role in assisting protein folding. The GroEL-GroES system forms a nano-cage that allows encapsulation of the non-native substrate proteins and provides a physical environment optimized to promote and accelerate protein folding. GroES binds to the apical surface of the GroEL ring, thereby capping the opening of the GroEL channel. The chain is Co-chaperonin GroES from Cupriavidus taiwanensis (strain DSM 17343 / BCRC 17206 / CCUG 44338 / CIP 107171 / LMG 19424 / R1) (Ralstonia taiwanensis (strain LMG 19424)).